We begin with the raw amino-acid sequence, 316 residues long: Transaldolase (316 aa).

The active-site Schiff-base intermediate with substrate is lysine 132.

It belongs to the transaldolase family. Type 1 subfamily.

Its subcellular location is the cytoplasm. The catalysed reaction is D-sedoheptulose 7-phosphate + D-glyceraldehyde 3-phosphate = D-erythrose 4-phosphate + beta-D-fructose 6-phosphate. It functions in the pathway carbohydrate degradation; pentose phosphate pathway; D-glyceraldehyde 3-phosphate and beta-D-fructose 6-phosphate from D-ribose 5-phosphate and D-xylulose 5-phosphate (non-oxidative stage): step 2/3. In terms of biological role, transaldolase is important for the balance of metabolites in the pentose-phosphate pathway. This is Transaldolase from Methylomonas aminofaciens.